The primary structure comprises 181 residues: Acireductone dioxygenase (181 aa).

Positions 97, 99, 103, and 141 each coordinate Fe(2+). Histidine 97, histidine 99, glutamate 103, and histidine 141 together coordinate Ni(2+).

The protein belongs to the acireductone dioxygenase (ARD) family. In terms of assembly, monomer. Fe(2+) serves as cofactor. It depends on Ni(2+) as a cofactor.

The catalysed reaction is 1,2-dihydroxy-5-(methylsulfanyl)pent-1-en-3-one + O2 = 3-(methylsulfanyl)propanoate + CO + formate + 2 H(+). It carries out the reaction 1,2-dihydroxy-5-(methylsulfanyl)pent-1-en-3-one + O2 = 4-methylsulfanyl-2-oxobutanoate + formate + 2 H(+). It functions in the pathway amino-acid biosynthesis; L-methionine biosynthesis via salvage pathway; L-methionine from S-methyl-5-thio-alpha-D-ribose 1-phosphate: step 5/6. Functionally, catalyzes 2 different reactions between oxygen and the acireductone 1,2-dihydroxy-3-keto-5-methylthiopentene (DHK-MTPene) depending upon the metal bound in the active site. Fe-containing acireductone dioxygenase (Fe-ARD) produces formate and 2-keto-4-methylthiobutyrate (KMTB), the alpha-ketoacid precursor of methionine in the methionine recycle pathway. Ni-containing acireductone dioxygenase (Ni-ARD) produces methylthiopropionate, carbon monoxide and formate, and does not lie on the methionine recycle pathway. This chain is Acireductone dioxygenase, found in Pseudomonas paraeruginosa (strain DSM 24068 / PA7) (Pseudomonas aeruginosa (strain PA7)).